The chain runs to 219 residues: MTQDELKKAVGWAALEFVTPGTVVGVGTGSTASHFIDALGSIKDQIEGAVSSSEASTEKLKSLGIPVFDCNEVDSLDIYVDGADEINGNMQMIKGGGAALTREKIIAAIAKKFVCIVDASKKVEVLGKFPLPVEVIPMARAYVARELVKLGGVPKYRQNVVTDNGNVILDVHNLAILDPAELENKINRISGVVTVGLFANRGADIVLMGTLDGVETITQ.

Substrate-binding positions include 28–31, 81–84, and 94–97; these read TGST, DGAD, and KGGG. Catalysis depends on Glu-103, which acts as the Proton acceptor. Lys-121 contributes to the substrate binding site.

This sequence belongs to the ribose 5-phosphate isomerase family. In terms of assembly, homodimer.

The catalysed reaction is aldehydo-D-ribose 5-phosphate = D-ribulose 5-phosphate. Its pathway is carbohydrate degradation; pentose phosphate pathway; D-ribose 5-phosphate from D-ribulose 5-phosphate (non-oxidative stage): step 1/1. Its function is as follows. Catalyzes the reversible conversion of ribose-5-phosphate to ribulose 5-phosphate. The protein is Ribose-5-phosphate isomerase A of Photorhabdus laumondii subsp. laumondii (strain DSM 15139 / CIP 105565 / TT01) (Photorhabdus luminescens subsp. laumondii).